The following is a 209-amino-acid chain: MIGLVGKKVGMTRIFTEDGVSIPVTVIEVEANRVTQVKDLANDGYRAVQVTTGAKKANRVTKPEAGHFAKAGVEAGRGLWEFRLAEGEEYTVGQSISVELFADVKKVDVTGTSKGKGFAGTVKRWNFRTQDATHGNSLSHRVPGSIGQNQTPGKVFKGKKMAGQMGNERVTVQSLDVVRVDAERNLLLVKGGVPGATGCDLIVKPAVKA.

N5-methylglutamine is present on Q150.

The protein belongs to the universal ribosomal protein uL3 family. In terms of assembly, part of the 50S ribosomal subunit. Forms a cluster with proteins L14 and L19. In terms of processing, methylated by PrmB.

One of the primary rRNA binding proteins, it binds directly near the 3'-end of the 23S rRNA, where it nucleates assembly of the 50S subunit. This Salmonella paratyphi C (strain RKS4594) protein is Large ribosomal subunit protein uL3.